Here is a 37-residue protein sequence, read N- to C-terminus: Large ribosomal subunit protein bL36 (37 aa).

This sequence belongs to the bacterial ribosomal protein bL36 family.

The sequence is that of Large ribosomal subunit protein bL36 from Mycoplasmopsis pulmonis (strain UAB CTIP) (Mycoplasma pulmonis).